The following is a 306-amino-acid chain: Dirigent protein 24 (306 aa).

The signal sequence occupies residues 1–21; that stretch reads MAKALSLTIFLFLLIASNVQS. Residues 36 to 61 are disordered; the sequence is PQVPEEEDDSPQAVTTTPTPIPLPGP.

It belongs to the plant dirigent protein family. In terms of assembly, homodimer.

It is found in the secreted. Its subcellular location is the extracellular space. The protein resides in the apoplast. Functionally, dirigent proteins impart stereoselectivity on the phenoxy radical-coupling reaction, yielding optically active lignans from two molecules of coniferyl alcohol in the biosynthesis of lignans, flavonolignans, and alkaloids and thus plays a central role in plant secondary metabolism. The protein is Dirigent protein 24 (DIR24) of Arabidopsis thaliana (Mouse-ear cress).